The primary structure comprises 227 residues: ATP phosphoribosyltransferase (227 aa).

This sequence belongs to the ATP phosphoribosyltransferase family. Short subfamily. As to quaternary structure, heteromultimer composed of HisG and HisZ subunits.

It localises to the cytoplasm. It catalyses the reaction 1-(5-phospho-beta-D-ribosyl)-ATP + diphosphate = 5-phospho-alpha-D-ribose 1-diphosphate + ATP. Its pathway is amino-acid biosynthesis; L-histidine biosynthesis; L-histidine from 5-phospho-alpha-D-ribose 1-diphosphate: step 1/9. Its function is as follows. Catalyzes the condensation of ATP and 5-phosphoribose 1-diphosphate to form N'-(5'-phosphoribosyl)-ATP (PR-ATP). Has a crucial role in the pathway because the rate of histidine biosynthesis seems to be controlled primarily by regulation of HisG enzymatic activity. The sequence is that of ATP phosphoribosyltransferase from Rhodospirillum rubrum (strain ATCC 11170 / ATH 1.1.1 / DSM 467 / LMG 4362 / NCIMB 8255 / S1).